We begin with the raw amino-acid sequence, 492 residues long: Glutamyl-tRNA(Gln) amidotransferase subunit A (492 aa).

Catalysis depends on charge relay system residues lysine 79 and serine 154. The active-site Acyl-ester intermediate is the serine 178.

The protein belongs to the amidase family. GatA subfamily. In terms of assembly, heterotrimer of A, B and C subunits.

It catalyses the reaction L-glutamyl-tRNA(Gln) + L-glutamine + ATP + H2O = L-glutaminyl-tRNA(Gln) + L-glutamate + ADP + phosphate + H(+). Functionally, allows the formation of correctly charged Gln-tRNA(Gln) through the transamidation of misacylated Glu-tRNA(Gln) in organisms which lack glutaminyl-tRNA synthetase. The reaction takes place in the presence of glutamine and ATP through an activated gamma-phospho-Glu-tRNA(Gln). The sequence is that of Glutamyl-tRNA(Gln) amidotransferase subunit A from Desulforudis audaxviator (strain MP104C).